Here is a 207-residue protein sequence, read N- to C-terminus: Adenylyl-sulfate kinase (207 aa).

34-41 serves as a coordination point for ATP; it reads GLSGSGKS. Catalysis depends on serine 108, which acts as the Phosphoserine intermediate.

Belongs to the APS kinase family.

It catalyses the reaction adenosine 5'-phosphosulfate + ATP = 3'-phosphoadenylyl sulfate + ADP + H(+). It functions in the pathway sulfur metabolism; hydrogen sulfide biosynthesis; sulfite from sulfate: step 2/3. Its function is as follows. Catalyzes the synthesis of activated sulfate. This is Adenylyl-sulfate kinase from Lactiplantibacillus plantarum (strain ATCC BAA-793 / NCIMB 8826 / WCFS1) (Lactobacillus plantarum).